Consider the following 540-residue polypeptide: MSVSYRGPRWSSFVHVSQHSCRFVAPTCAEGAQGCSEFGAFPVFEERGMCAARRMRRAAIAACCVFARGAAANPYQQLLRHRLEALRPGARAQIEFDVAHCGYEKARLRSAGTYVLGSELEIRGHSAGDFGLPRFGIKPIIGVRSPRYNNLVVSIDTARVTSIGNISRINADIGVDLYSNVRGRELIRMRRAEHEEKAAQNGERIKSPSVELALIDELEVLFTRAQSLVRREFHMGDARLVHLRTRAAGFSEHSEKARRVRLAYDRTQREFEQEERLFAQVCDPFAAVCAVGGGDEARRDFLLQLAEAVPREVPLSLVSLHATDAHSLAAAQEMALLERAAQRSERDLYAVRVGAVVSMGTRKTFILFKGDGTESLEGSGTVALHMPSVNAQVEVKVPYAERGKHSRDKVGVYGKSQWNPLEIAYKVFERREERAQEQEQEQYCEDSLARETRKMEGLEVQGKQLFAAQETALRTREALRLDLAKVERAAARGVVGGNRLARARCEYAVAQLRAACAKLHMLRFNLGVVRAFGLVPQVAP.

A signal peptide spans 1–20 (MSVSYRGPRWSSFVHVSQHS).

This sequence belongs to the TP096X family.

This is an uncharacterized protein from Treponema pallidum (strain Nichols).